The primary structure comprises 424 residues: Tubulin-specific chaperone cofactor E-like protein (424 aa).

Residues Ser-18 and Ser-41 each carry the phosphoserine modification. LRR repeat units follow at residues 73–98, 99–123, 124–147, 150–172, 173–197, 199–224, and 226–250; these read CAHV…IVSN, VPQL…TCAG, SFSG…HMIL, LPDL…PSIC, CHSL…KLGV, FPSL…SLAR, and FPNL…KLNS. The LRRCT domain occupies 262–303; the sequence is IPLLQPYTTEERRKLVIARLPSVSKLNGSVVTDGEREDSERF. The 91-residue stretch at 334-424 folds into the Ubiquitin-like domain; that stretch reads AEVDLRPQSS…DKIYVESKTK (91 aa). The stretch at 349 to 375 forms a coiled coil; it reads HFNDQVEEMSIRLDQTVAELKKQLKTL.

As to expression, abundantly expressed in testis, but is also present in several tissues at a much lower level.

The protein resides in the cytoplasm. It localises to the cytoskeleton. In terms of biological role, acts as a regulator of tubulin stability. The chain is Tubulin-specific chaperone cofactor E-like protein (TBCEL) from Homo sapiens (Human).